The sequence spans 271 residues: Low choriolytic enzyme (271 aa).

The N-terminal stretch at 1–20 is a signal peptide; the sequence is MDLLAKASVLLLLLLSLSNA. A propeptide spans 21–71 (activation peptide); the sequence is QTDNMEEAENGSSKEEIDESELEDVSSIIFRMNNNSMEELLEGDLVLPKTR. N-linked (GlcNAc...) asparagine glycosylation is found at Asn30 and Asn54. One can recognise a Peptidase M12A domain in the interval 72-271; it reads NAMKCFGAPD…ILRVNKLYKC (200 aa). Disulfide bonds link Cys76–Cys83, Cys123–Cys271, and Cys144–Cys164. His172 contacts Zn(2+). Residue Glu173 is part of the active site. Zn(2+) is bound by residues His176 and His182. N-linked (GlcNAc...) asparagine glycosylation is present at Asn211.

The cofactor is Zn(2+).

The protein resides in the zymogen granule. The enzyme catalyses Hydrolysis of the inner layer of fish egg envelope. Also hydrolysis of casein and small molecule substrates such as succinyl-Leu-Leu-Val-Tyr-|-7-(4-methyl)coumarylamide.. Functionally, participates in the breakdown of the egg envelope, which is derived from the egg extracellular matrix, at the time of hatching. Thus allowing the newly hatched fish to swim free. LCE solubilizes the egg envelope only after it has been swollen by the action of HCE. The chain is Low choriolytic enzyme (lce) from Oryzias latipes (Japanese rice fish).